The following is a 101-amino-acid chain: A-type ATP synthase subunit F (101 aa).

The protein belongs to the V-ATPase F subunit family. In terms of assembly, has multiple subunits with at least A(3), B(3), C, D, E, F, H, I and proteolipid K(x).

Its subcellular location is the cell membrane. Its function is as follows. Component of the A-type ATP synthase that produces ATP from ADP in the presence of a proton gradient across the membrane. The polypeptide is A-type ATP synthase subunit F (Archaeoglobus fulgidus (strain ATCC 49558 / DSM 4304 / JCM 9628 / NBRC 100126 / VC-16)).